A 122-amino-acid polypeptide reads, in one-letter code: Large ribosomal subunit protein uL14 (122 aa).

The protein belongs to the universal ribosomal protein uL14 family. In terms of assembly, part of the 50S ribosomal subunit. Forms a cluster with proteins L3 and L19. In the 70S ribosome, L14 and L19 interact and together make contacts with the 16S rRNA in bridges B5 and B8.

In terms of biological role, binds to 23S rRNA. Forms part of two intersubunit bridges in the 70S ribosome. This Chloroflexus aurantiacus (strain ATCC 29366 / DSM 635 / J-10-fl) protein is Large ribosomal subunit protein uL14.